The primary structure comprises 454 residues: tRNA modification GTPase MnmE (454 aa).

The (6S)-5-formyl-5,6,7,8-tetrahydrofolate site is built by R23, E80, and K120. One can recognise a TrmE-type G domain in the interval G216–G377. N226 provides a ligand contact to K(+). GTP is bound by residues N226–S231, T245–T251, D270–G273, N335–D338, and S358–R360. Residue S230 participates in Mg(2+) binding. K(+)-binding residues include T245, I247, and T250. T251 lines the Mg(2+) pocket. Residue K454 participates in (6S)-5-formyl-5,6,7,8-tetrahydrofolate binding.

It belongs to the TRAFAC class TrmE-Era-EngA-EngB-Septin-like GTPase superfamily. TrmE GTPase family. As to quaternary structure, homodimer. Heterotetramer of two MnmE and two MnmG subunits. It depends on K(+) as a cofactor.

Its subcellular location is the cytoplasm. Exhibits a very high intrinsic GTPase hydrolysis rate. Involved in the addition of a carboxymethylaminomethyl (cmnm) group at the wobble position (U34) of certain tRNAs, forming tRNA-cmnm(5)s(2)U34. This chain is tRNA modification GTPase MnmE, found in Escherichia coli O17:K52:H18 (strain UMN026 / ExPEC).